A 1026-amino-acid polypeptide reads, in one-letter code: Multidrug resistance protein MdtC (1026 aa).

The next 11 membrane-spanning stretches (helical) occupy residues 15–35 (ILIAAAITLCGILGFRLLPVA), 333–353 (EVEETLAISVALVILVVFLFL), 360–380 (LIPAVAVPVSLISTFAAMYLC), 387–407 (LSLMALTIATGFVVDDAIVVL), 431–451 (VGFTVISMSLSLVAVFLPLLL), 463–483 (FAVTLSVAIGISLVVSLTLTP), 528–548 (LVGVVFLGTIALNIWLYIAIP), 853–873 (LILIMAAIATVYIVLGILYES), 897–917 (LFNAPFSLIALIGIMLLIGIV), 953–973 (PIMMTTLAAMFGALPLVLSGG), and 984–1004 (ITIVGGLVMSQLLTLYTTPVV).

It belongs to the resistance-nodulation-cell division (RND) (TC 2.A.6) family. MdtC subfamily. In terms of assembly, part of a tripartite efflux system composed of MdtA, MdtB and MdtC. MdtC forms a heteromultimer with MdtB.

It is found in the cell inner membrane. The chain is Multidrug resistance protein MdtC from Salmonella arizonae (strain ATCC BAA-731 / CDC346-86 / RSK2980).